Here is a 435-residue protein sequence, read N- to C-terminus: Actin-like protein 7A (435 aa).

2 disordered regions span residues 1–20 (MWAP…VGNQ) and 29–65 (QTAS…ERPK). The tract at residues 31-51 (ASLRDGPAKRAVWVRRRSSEP) is required for interaction with TES. Positions 47–65 (RSSEPQEPTESKAAKERPK) are enriched in basic and acidic residues.

This sequence belongs to the actin family. As to quaternary structure, interacts (via N-terminus) with TES (via LIM domain 2). Heterodimer with TES; the heterodimer interacts with ENAH to form a heterotrimer. Interacts with ACTL9. Interacts with CYLC1; the interaction may be relevant for proper acrosome attachment to the nuclear envelope.

It localises to the cytoplasm. It is found in the cytoskeleton. The protein resides in the golgi apparatus. Its subcellular location is the nucleus. Essential for normal spermatogenesis and male fertility. Required for normal sperm head morphology, acroplaxome formation, acrosome attachment, and acrosome granule stability. May anchor and stabilize acrosomal adherence to the acroplaxome at least in part by facilitating the presence of F-actin in the subacrosomal space. May play an important role in formation and fusion of Golgi-derived vesicles during acrosome biogenesis. The sequence is that of Actin-like protein 7A (ACTL7A) from Macaca fascicularis (Crab-eating macaque).